The primary structure comprises 430 residues: C4-dicarboxylate transport protein (430 aa).

Helical transmembrane passes span 8-28, 44-64, 76-96, 144-164, 184-204, 222-242, 289-309, 326-346, and 352-372; these read SLYFQVLAAITIGILLGHFYP, LIKMIIAPVIFCTVVTGIAGM, AALLYFEVVSTIALIIGLVVV, AFASGNILQVLLFAVMFGFAL, VIFGVINMIMKLAPLGAFGAM, LILCFYLTCILFVFLVLGSIA, VVGLVIPTGYSFNLDGTSIYL, IWHQITLLVVLLLSSKGAAGV, and IVLAATLSAVGHLPVAGLALI.

It belongs to the dicarboxylate/amino acid:cation symporter (DAACS) (TC 2.A.23) family.

The protein localises to the cell inner membrane. Responsible for the transport of dicarboxylates such as succinate, fumarate, and malate from the periplasm across the membrane. The polypeptide is C4-dicarboxylate transport protein (Pectobacterium atrosepticum (strain SCRI 1043 / ATCC BAA-672) (Erwinia carotovora subsp. atroseptica)).